The primary structure comprises 123 residues: UPF0102 protein PputW619_0932 (123 aa).

This sequence belongs to the UPF0102 family.

This Pseudomonas putida (strain W619) protein is UPF0102 protein PputW619_0932.